Here is a 56-residue protein sequence, read N- to C-terminus: uncharacterized protein (56 aa).

The next 2 membrane-spanning stretches (helical) occupy residues Val-5–Tyr-23 and Ile-33–Trp-55.

The protein resides in the cell membrane. This is an uncharacterized protein from Archaeoglobus fulgidus (strain ATCC 49558 / DSM 4304 / JCM 9628 / NBRC 100126 / VC-16).